The chain runs to 450 residues: Phosphoglucosamine mutase (450 aa).

Ser102 (phosphoserine intermediate) is an active-site residue. Positions 102, 242, 244, and 246 each coordinate Mg(2+). Ser102 is subject to Phosphoserine.

This sequence belongs to the phosphohexose mutase family. The cofactor is Mg(2+). In terms of processing, activated by phosphorylation.

The catalysed reaction is alpha-D-glucosamine 1-phosphate = D-glucosamine 6-phosphate. Catalyzes the conversion of glucosamine-6-phosphate to glucosamine-1-phosphate. This chain is Phosphoglucosamine mutase, found in Staphylococcus haemolyticus (strain JCSC1435).